We begin with the raw amino-acid sequence, 323 residues long: Transaldolase (323 aa).

Residue Lys133 is the Schiff-base intermediate with substrate of the active site.

This sequence belongs to the transaldolase family. Type 1 subfamily. Monomer.

The catalysed reaction is D-sedoheptulose 7-phosphate + D-glyceraldehyde 3-phosphate = D-erythrose 4-phosphate + beta-D-fructose 6-phosphate. Its pathway is carbohydrate degradation; pentose phosphate pathway; D-glyceraldehyde 3-phosphate and beta-D-fructose 6-phosphate from D-ribose 5-phosphate and D-xylulose 5-phosphate (non-oxidative stage): step 2/3. In terms of biological role, important for the balance of metabolites in the pentose-phosphate pathway. Involved in xylose fermentation to ethanol. In Gibberella intermedia (Bulb rot disease fungus), this protein is Transaldolase.